The following is a 148-amino-acid chain: Photosystem I reaction center subunit XI (148 aa).

The next 3 helical transmembrane spans lie at 48–68, 73–93, and 122–142; these read LEIG…LGPL, IGLL…TLGL, and GGFF…LSSI.

Belongs to the PsaL family.

The protein resides in the plastid. Its subcellular location is the chloroplast thylakoid membrane. The protein is Photosystem I reaction center subunit XI of Thalassiosira pseudonana (Marine diatom).